A 453-amino-acid chain; its full sequence is Bifunctional protein GlmU (453 aa).

The segment at 1–225 (MNIVILAAGT…EWETLGVNSK (225 aa)) is pyrophosphorylase. UDP-N-acetyl-alpha-D-glucosamine is bound by residues 6-9 (LAAG), lysine 20, glutamine 71, 76-77 (GT), 98-100 (YGD), glycine 135, glutamate 150, asparagine 165, and asparagine 223. Aspartate 100 serves as a coordination point for Mg(2+). Residue asparagine 223 participates in Mg(2+) binding. The linker stretch occupies residues 226–246 (AQLAELERIHQRNVADALLVD). Residues 247-453 (GVTLADPARV…GYVRPVKKKS (207 aa)) form an N-acetyltransferase region. UDP-N-acetyl-alpha-D-glucosamine contacts are provided by arginine 329 and lysine 347. Catalysis depends on histidine 359, which acts as the Proton acceptor. Residues tyrosine 362 and asparagine 373 each contribute to the UDP-N-acetyl-alpha-D-glucosamine site. Acetyl-CoA is bound by residues alanine 376, 382–383 (NY), serine 401, and alanine 419.

In the N-terminal section; belongs to the N-acetylglucosamine-1-phosphate uridyltransferase family. It in the C-terminal section; belongs to the transferase hexapeptide repeat family. Homotrimer. Requires Mg(2+) as cofactor.

Its subcellular location is the cytoplasm. The enzyme catalyses alpha-D-glucosamine 1-phosphate + acetyl-CoA = N-acetyl-alpha-D-glucosamine 1-phosphate + CoA + H(+). It carries out the reaction N-acetyl-alpha-D-glucosamine 1-phosphate + UTP + H(+) = UDP-N-acetyl-alpha-D-glucosamine + diphosphate. The protein operates within nucleotide-sugar biosynthesis; UDP-N-acetyl-alpha-D-glucosamine biosynthesis; N-acetyl-alpha-D-glucosamine 1-phosphate from alpha-D-glucosamine 6-phosphate (route II): step 2/2. It functions in the pathway nucleotide-sugar biosynthesis; UDP-N-acetyl-alpha-D-glucosamine biosynthesis; UDP-N-acetyl-alpha-D-glucosamine from N-acetyl-alpha-D-glucosamine 1-phosphate: step 1/1. Its pathway is bacterial outer membrane biogenesis; LPS lipid A biosynthesis. In terms of biological role, catalyzes the last two sequential reactions in the de novo biosynthetic pathway for UDP-N-acetylglucosamine (UDP-GlcNAc). The C-terminal domain catalyzes the transfer of acetyl group from acetyl coenzyme A to glucosamine-1-phosphate (GlcN-1-P) to produce N-acetylglucosamine-1-phosphate (GlcNAc-1-P), which is converted into UDP-GlcNAc by the transfer of uridine 5-monophosphate (from uridine 5-triphosphate), a reaction catalyzed by the N-terminal domain. The protein is Bifunctional protein GlmU of Burkholderia ambifaria (strain ATCC BAA-244 / DSM 16087 / CCUG 44356 / LMG 19182 / AMMD) (Burkholderia cepacia (strain AMMD)).